Consider the following 286-residue polypeptide: Ribosomal RNA small subunit methyltransferase A (286 aa).

S-adenosyl-L-methionine-binding residues include N33, V35, G60, E81, D111, and N129.

The protein belongs to the class I-like SAM-binding methyltransferase superfamily. rRNA adenine N(6)-methyltransferase family. RsmA subfamily.

Its subcellular location is the cytoplasm. It catalyses the reaction adenosine(1518)/adenosine(1519) in 16S rRNA + 4 S-adenosyl-L-methionine = N(6)-dimethyladenosine(1518)/N(6)-dimethyladenosine(1519) in 16S rRNA + 4 S-adenosyl-L-homocysteine + 4 H(+). In terms of biological role, specifically dimethylates two adjacent adenosines (A1518 and A1519) in the loop of a conserved hairpin near the 3'-end of 16S rRNA in the 30S particle. May play a critical role in biogenesis of 30S subunits. The sequence is that of Ribosomal RNA small subunit methyltransferase A from Streptomyces coelicolor (strain ATCC BAA-471 / A3(2) / M145).